The sequence spans 346 residues: Enkurin domain-containing protein 1 (346 aa).

A disordered region spans residues 1–35 (MCEGPSRISGPIPPDPTLCPDNYRRPTSAQGRLEG). The residue at position 91 (Ser-91) is a Phosphoserine. Residues 91 to 171 (SLKRKDPKDH…AHFLRAHSRC (81 aa)) are required for binding to microtubules. The span at 114–125 (RFREQERSREQG) shows a compositional bias: basic and acidic residues. Disordered stretches follow at residues 114–137 (RFRE…WRSP), 167–197 (AHSR…EPGL), and 260–280 (AEAR…TRMP). Ser-136 is subject to Phosphoserine. Positions 174–190 (GLPPPHVSSPQPTPPGP) are enriched in pro residues. In terms of domain architecture, Enkurin spans 251–343 (ERRDLWRREA…IFSRPKVFVK (93 aa)).

In terms of assembly, interacts with alpha-tubulin. Interacts (via central region) with CCP110 (via N-terminal region); competes with CEP97 for binding to CCP110.

The protein resides in the cytoplasm. It localises to the cytoskeleton. The protein localises to the microtubule organizing center. It is found in the centrosome. Its subcellular location is the centriole. The protein resides in the cilium basal body. It localises to the cell projection. The protein localises to the cilium. It is found in the spindle. Its subcellular location is the spindle pole. The protein resides in the cilium axoneme. Functionally, microtubule-binding protein which regulates microtubule organization and stability. Promotes the stability of astral microtubules and facilitates the proper orientation of the mitotic spindle. This allows the oriented division of basal keratinocytes and contributes to epidermal stratification. Required for the assembly of both primary and motile cilia. Destabilizes the interaction between CCP110 and CEP97 by competing with CEP97 for binding to CCP110 which promotes the removal of CCP110 and CEP97 from the mother centriole and allows the initiation of ciliogenesis. The chain is Enkurin domain-containing protein 1 (ENKD1) from Homo sapiens (Human).